Here is an 89-residue protein sequence, read N- to C-terminus: Small ribosomal subunit protein uS15 (89 aa).

It belongs to the universal ribosomal protein uS15 family. In terms of assembly, part of the 30S ribosomal subunit. Forms a bridge to the 50S subunit in the 70S ribosome, contacting the 23S rRNA.

Its function is as follows. One of the primary rRNA binding proteins, it binds directly to 16S rRNA where it helps nucleate assembly of the platform of the 30S subunit by binding and bridging several RNA helices of the 16S rRNA. Forms an intersubunit bridge (bridge B4) with the 23S rRNA of the 50S subunit in the ribosome. The protein is Small ribosomal subunit protein uS15 of Cellvibrio japonicus (strain Ueda107) (Pseudomonas fluorescens subsp. cellulosa).